The following is a 351-amino-acid chain: Tryptophan--tRNA ligase (351 aa).

Residues 11–13 (RPT) and 19–20 (GH) contribute to the ATP site. A 'HIGH' region motif is present at residues 12-20 (PTGALHLGH). Aspartate 139 contacts L-tryptophan. Residues 151 to 153 (GRD), leucine 190, and 198 to 202 (KMSKS) contribute to the ATP site. The short motif at 198–202 (KMSKS) is the 'KMSKS' region element.

Belongs to the class-I aminoacyl-tRNA synthetase family. As to quaternary structure, homodimer.

Its subcellular location is the cytoplasm. It catalyses the reaction tRNA(Trp) + L-tryptophan + ATP = L-tryptophyl-tRNA(Trp) + AMP + diphosphate + H(+). Functionally, catalyzes the attachment of tryptophan to tRNA(Trp). The sequence is that of Tryptophan--tRNA ligase from Borreliella burgdorferi (strain ATCC 35210 / DSM 4680 / CIP 102532 / B31) (Borrelia burgdorferi).